Reading from the N-terminus, the 718-residue chain is Probable trehalose-phosphatase (718 aa).

The tract at residues 449–470 (LSMDQTGHKKVDAKKKPGIRKK) is disordered. The segment covering 459–470 (VDAKKKPGIRKK) has biased composition (basic residues).

The protein in the N-terminal section; belongs to the glycosyltransferase 20 family. In the C-terminal section; belongs to the trehalose phosphatase family.

It carries out the reaction alpha,alpha-trehalose 6-phosphate + H2O = alpha,alpha-trehalose + phosphate. This Encephalitozoon cuniculi (strain GB-M1) (Microsporidian parasite) protein is Probable trehalose-phosphatase.